We begin with the raw amino-acid sequence, 313 residues long: Tetraspanning orphan receptor (313 aa).

Topologically, residues 1 to 54 are extracellular; sequence PQCESETNFHYDIPPGYKDDVLVDVNNMSPSLVSDTQKHERGSHEVKIKHFSPY. The chain crosses the membrane as a helical span at residues 55-75; that stretch reads IAVCVTTFSLAFCCFMVHAAI. Residues 76-82 are Cytoplasmic-facing; the sequence is TRQPTHL. A helical transmembrane segment spans residues 83–103; that stretch reads LPFFFIQVFDLIICLIHILGF. The Extracellular segment spans residues 104 to 129; the sequence is MSSTSDIRLVIHTKTGPIYIKSTGLT. The helical transmembrane segment at 130–150 threads the bilayer; it reads FIILSISCMMLAFKAYCLGMV. At 151–313 the chain is on the cytoplasmic side; it reads WDCYKYLMLN…NASSNAHSSC (163 aa). Disordered regions lie at residues 192–218 and 279–313; these read NNSI…YDPA and NTNT…HSSC. The segment covering 279 to 295 has biased composition (low complexity); that stretch reads NTNTSTTTSVISPLTTT. Over residues 301–313 the composition is skewed to polar residues; the sequence is QINNASSNAHSSC.

As to quaternary structure, interacts (via N-terminal extracellular domain) with human C2a. Post-translationally, phosphorylated on tyrosine residues.

It is found in the cell membrane. Its function is as follows. Cell surface receptor that binds to human complement C2a protein. This results in inhibition of the classical and lectin pathways of complement activation, probably due to interference with binding of C2a to C4b and interference with cleavage by C1 or MASP2 such that C3 convertase cannot be formed. This infers resistance to complement-mediated cell lysis, allowing parasite survival and infection. The sequence is that of Tetraspanning orphan receptor from Schistosoma haematobium (Blood fluke).